We begin with the raw amino-acid sequence, 476 residues long: Cardiolipin synthase (476 aa).

2 helical membrane-spanning segments follow: residues 2–22 (HLFINMIFLINIVFIISIIFI) and 31–51 (WAWILILTFLPILGFIIYILF). PLD phosphodiesterase domains lie at 207 to 234 (INYRNHRKILIIDSKVAFLGGFNIGDEY) and 389 to 416 (EKGFLHAKTIVADSSICSVGTANMDIRS). Residues His212, Lys214, Asp219, His394, Lys396, and Asp401 contribute to the active site.

The protein belongs to the phospholipase D family. Cardiolipin synthase subfamily.

It is found in the cell membrane. It catalyses the reaction 2 a 1,2-diacyl-sn-glycero-3-phospho-(1'-sn-glycerol) = a cardiolipin + glycerol. Its function is as follows. Catalyzes the reversible phosphatidyl group transfer from one phosphatidylglycerol molecule to another to form cardiolipin (CL) (diphosphatidylglycerol) and glycerol. This is Cardiolipin synthase (cls) from Clostridium perfringens (strain 13 / Type A).